The primary structure comprises 325 residues: ATP phosphoribosyltransferase (325 aa).

This sequence belongs to the ATP phosphoribosyltransferase family. Long subfamily. Requires Mg(2+) as cofactor.

The protein localises to the cytoplasm. It carries out the reaction 1-(5-phospho-beta-D-ribosyl)-ATP + diphosphate = 5-phospho-alpha-D-ribose 1-diphosphate + ATP. It functions in the pathway amino-acid biosynthesis; L-histidine biosynthesis; L-histidine from 5-phospho-alpha-D-ribose 1-diphosphate: step 1/9. With respect to regulation, feedback inhibited by histidine. Catalyzes the condensation of ATP and 5-phosphoribose 1-diphosphate to form N'-(5'-phosphoribosyl)-ATP (PR-ATP). Has a crucial role in the pathway because the rate of histidine biosynthesis seems to be controlled primarily by regulation of HisG enzymatic activity. The polypeptide is ATP phosphoribosyltransferase (Afipia carboxidovorans (strain ATCC 49405 / DSM 1227 / KCTC 32145 / OM5) (Oligotropha carboxidovorans)).